The sequence spans 220 residues: Thiamine-phosphate synthase (220 aa).

Residues 39–43 and asparagine 80 contribute to the 4-amino-2-methyl-5-(diphosphooxymethyl)pyrimidine site; that span reads QLRDK. Aspartate 81 and aspartate 100 together coordinate Mg(2+). 4-amino-2-methyl-5-(diphosphooxymethyl)pyrimidine is bound at residue serine 119. Residue 145–147 participates in 2-[(2R,5Z)-2-carboxy-4-methylthiazol-5(2H)-ylidene]ethyl phosphate binding; the sequence is TPT. Position 148 (lysine 148) interacts with 4-amino-2-methyl-5-(diphosphooxymethyl)pyrimidine. Glycine 176 contacts 2-[(2R,5Z)-2-carboxy-4-methylthiazol-5(2H)-ylidene]ethyl phosphate.

Belongs to the thiamine-phosphate synthase family. Mg(2+) is required as a cofactor.

The enzyme catalyses 2-[(2R,5Z)-2-carboxy-4-methylthiazol-5(2H)-ylidene]ethyl phosphate + 4-amino-2-methyl-5-(diphosphooxymethyl)pyrimidine + 2 H(+) = thiamine phosphate + CO2 + diphosphate. It carries out the reaction 2-(2-carboxy-4-methylthiazol-5-yl)ethyl phosphate + 4-amino-2-methyl-5-(diphosphooxymethyl)pyrimidine + 2 H(+) = thiamine phosphate + CO2 + diphosphate. It catalyses the reaction 4-methyl-5-(2-phosphooxyethyl)-thiazole + 4-amino-2-methyl-5-(diphosphooxymethyl)pyrimidine + H(+) = thiamine phosphate + diphosphate. The protein operates within cofactor biosynthesis; thiamine diphosphate biosynthesis; thiamine phosphate from 4-amino-2-methyl-5-diphosphomethylpyrimidine and 4-methyl-5-(2-phosphoethyl)-thiazole: step 1/1. Functionally, condenses 4-methyl-5-(beta-hydroxyethyl)thiazole monophosphate (THZ-P) and 2-methyl-4-amino-5-hydroxymethyl pyrimidine pyrophosphate (HMP-PP) to form thiamine monophosphate (TMP). In Mycobacterium ulcerans (strain Agy99), this protein is Thiamine-phosphate synthase.